The following is a 336-amino-acid chain: Phosphate acyltransferase (336 aa).

It belongs to the PlsX family. As to quaternary structure, homodimer. Probably interacts with PlsY.

The protein localises to the cytoplasm. The catalysed reaction is a fatty acyl-[ACP] + phosphate = an acyl phosphate + holo-[ACP]. It participates in lipid metabolism; phospholipid metabolism. Catalyzes the reversible formation of acyl-phosphate (acyl-PO(4)) from acyl-[acyl-carrier-protein] (acyl-ACP). This enzyme utilizes acyl-ACP as fatty acyl donor, but not acyl-CoA. The chain is Phosphate acyltransferase from Pseudomonas aeruginosa (strain UCBPP-PA14).